We begin with the raw amino-acid sequence, 240 residues long: Uridylate cyclase (240 aa).

Residues 45 to 180 (TYLYADMANS…RAPNLAAKLS (136 aa)) form the Guanylate cyclase domain. Tyr48 serves as a coordination point for a ribonucleoside 5'-triphosphate. Mn(2+) is bound by residues Asp50 and Asp94. Arg95 is an a ribonucleoside 5'-triphosphate binding site.

It belongs to the adenylyl cyclase class-4/guanylyl cyclase family. Pyrimidine cyclase subfamily. As to quaternary structure, homodimer. Requires Mn(2+) as cofactor.

Its subcellular location is the cytoplasm. The enzyme catalyses UTP = 3',5'-cyclic UMP + diphosphate. Pycsar (pyrimidine cyclase system for antiphage resistance) provides immunity against bacteriophage. The pyrimidine cyclase (PycC) synthesizes cyclic nucleotides in response to infection; these serve as specific second messenger signals. The signals activate the adjacent effector, leading to bacterial cell death and abortive phage infection. A clade B Pycsar system. Functionally, the pyrimidine cyclase gene of a two-gene Pycsar system, weakly generates cyclic UMP (cUMP) from UTP, has little to no activity on ATP, CTP or GTP. Expression of this and adjacent effector RsmPycTM (AC A0A1V0HUU2) probably confers resistance to bacteriophage. The genes are probably only expressed in response to bacteriophage infection. The protein is Uridylate cyclase of Rhodovulum sp. (strain MB263).